Here is a 365-residue protein sequence, read N- to C-terminus: MRVLSLFLKDFRNYTDLRLELGPEMNSIFGLNAQGKTNLLEALYILSLGRSFRTSRLTDAIRFGASHFFIEAVFSHKEVFHTLSIQVDKKGKKILFDGAPITKLSELVGLFPVILFSIKDIAIIEGSPSERRRFLDLLLAQASDKYTEHISLYHKALDQRNASIKAQNQKAISAWNSPLIAYGSLVAFLRNECTKKLNTIFQTLWDNTLKETLSLRYESSLITEESPTLNDIASNYYEQLRIANTKDLDLGYTMVGPHRDELLLTINDLPVAKFSSEGQKHSLLAVLRFAECVYLQEEFCIHPLLCMDDIHACLDQQRLDQLLQLSNSLGQVVTTSTICPDHRSTTSCIFHVTQAQVSLVAPQSL.

ATP is bound at residue 30-37 (GLNAQGKT).

It belongs to the RecF family.

It localises to the cytoplasm. Its function is as follows. The RecF protein is involved in DNA metabolism; it is required for DNA replication and normal SOS inducibility. RecF binds preferentially to single-stranded, linear DNA. It also seems to bind ATP. The polypeptide is DNA replication and repair protein RecF (Chlamydia trachomatis serovar L2b (strain UCH-1/proctitis)).